The following is a 208-amino-acid chain: dITP/XTP pyrophosphatase (208 aa).

15–20 contacts substrate; sequence SHNAGK. Mg(2+)-binding residues include Glu47 and Asp76. Residue Asp76 is the Proton acceptor of the active site. Residues Ser77, 157-160, Lys180, and 185-186 each bind substrate; these read HGYD and HR.

This sequence belongs to the HAM1 NTPase family. Homodimer. Requires Mg(2+) as cofactor.

It catalyses the reaction XTP + H2O = XMP + diphosphate + H(+). It carries out the reaction dITP + H2O = dIMP + diphosphate + H(+). The catalysed reaction is ITP + H2O = IMP + diphosphate + H(+). Pyrophosphatase that catalyzes the hydrolysis of nucleoside triphosphates to their monophosphate derivatives, with a high preference for the non-canonical purine nucleotides XTP (xanthosine triphosphate), dITP (deoxyinosine triphosphate) and ITP. Seems to function as a house-cleaning enzyme that removes non-canonical purine nucleotides from the nucleotide pool, thus preventing their incorporation into DNA/RNA and avoiding chromosomal lesions. This Gluconobacter oxydans (strain 621H) (Gluconobacter suboxydans) protein is dITP/XTP pyrophosphatase.